A 224-amino-acid polypeptide reads, in one-letter code: RNA-binding protein 24-B (224 aa).

Positions 11-88 constitute an RRM domain; the sequence is TKIFVGGLPY…RKANVNLAYL (78 aa).

It localises to the nucleus. It is found in the cytoplasm. Multifunctional RNA-binding protein involved in the regulation of pre-mRNA splicing, mRNA stability and mRNA translation important for cell fate decision and differentiation. Plays a major role in pre-mRNA alternative splicing regulation. Mediates preferentially muscle-specific exon inclusion in numerous mRNAs important for striated cardiac and skeletal muscle cell differentiation. Binds to intronic splicing enhancer (ISE) composed of stretches of GU-rich motifs localized in flanking intron of exon that will be included by alternative splicing. Involved in embryonic stem cell (ESC) transition to cardiac cell differentiation by promoting pre-mRNA alternative splicing events of several pluripotency and/or differentiation genes. Plays a role in the regulation of mRNA stability and mRNA translation to which it is bound. Involved in myogenic differentiation by regulating myog levels. Binds to a huge amount of mRNAs. Required for embryonic heart development, sarcomer and M-band formation in striated muscles. The polypeptide is RNA-binding protein 24-B (rbm24-b) (Xenopus laevis (African clawed frog)).